Consider the following 223-residue polypeptide: Sigma non-opioid intracellular receptor 1 (223 aa).

Residues 1 to 9 (MPWAVGRRW) are Lumenal-facing. A targeting to endoplasmic reticulum-associated lipid droplets region spans residues 2–8 (PWAVGRR). A helical membrane pass occupies residues 10–30 (AWITLFLTIVAVLIQAVWLWL). Residues 31–223 (GTQSFVFQRE…LTTYLFGQDP (193 aa)) are Cytoplasmic-facing. Residues 99 to 106 (SLSEYVLL) form an important for ligand-binding region. The interval 177–223 (VIPSTLAFALSDTIFSTQDFLTLFYTLRAYARGLRLELTTYLFGQDP) is C-terminal hydrophobic region.

This sequence belongs to the ERG2 family. As to quaternary structure, homotrimer. Interacts with KCNA2; cocaine consumption leads to increased interaction. Forms a ternary complex with ANK2 and ITPR3. The complex is disrupted by agonists. Interacts with KCNA4. Interacts with RNF112 in an oxidative stress-regulated manner. Expressed in ependymocytes and neurons throughout the CNS from the olfactory bulb to the spinal cord. Expressed by progenitor, mature and satellite oligodendrocytes and by Schwann cells (at protein level). Expressed in liver, intestine, kidney, brain, lung and heart. Expressed by retinal cells.

It localises to the nucleus inner membrane. The protein resides in the nucleus outer membrane. The protein localises to the nucleus envelope. Its subcellular location is the cytoplasmic vesicle. It is found in the endoplasmic reticulum membrane. It localises to the membrane. The protein resides in the lipid droplet. The protein localises to the cell junction. Its subcellular location is the cell membrane. It is found in the cell projection. It localises to the growth cone. The protein resides in the postsynaptic density membrane. Functions in lipid transport from the endoplasmic reticulum and is involved in a wide array of cellular functions probably through regulation of the biogenesis of lipid microdomains at the plasma membrane. Involved in the regulation of different receptors it plays a role in BDNF signaling and EGF signaling. Also regulates ion channels like the potassium channel and could modulate neurotransmitter release. Plays a role in calcium signaling through modulation together with ANK2 of the ITP3R-dependent calcium efflux at the endoplasmic reticulum. Plays a role in several other cell functions including proliferation, survival and death. Originally identified for its ability to bind various psychoactive drugs it is involved in learning processes, memory and mood alteration. Necessary for proper mitochondrial axonal transport in motor neurons, in particular the retrograde movement of mitochondria. Plays a role in protecting cells against oxidative stress-induced cell death via its interaction with RNF112. The sequence is that of Sigma non-opioid intracellular receptor 1 (Sigmar1) from Rattus norvegicus (Rat).